The following is a 471-amino-acid chain: MVLDSGAQAYDQAPPSPPTSPPSLRHRLKPSDRDGPPLYPWSQSLALPLALAVPPALQPQPEQQPFSQMLLGHRGHMRRSESTYSVNSTGRRGRGTLGRPPPGRGRNPGGGTLRPAASLPHIAKTQRDAGHIASKSPCMLVALRPTNMDRERDKFFQSHYTYNPQFEYQEPMPTAVLEKYCEASGQFIHQAVGIIEAVLEKFGTYEHFEAATGGQLLTKCQIWSIVRKYMQKEGCAGEVVVQLSEDLLSQAVMMVENSRPTLAINLTGARQYWLEGMLRHEIGTHYLRGVNNARQPWHNAEGRLRYGLRPANPTEEGLASLHSVLFRKQPFLWRAALLYYTIHRAARMSFRQLFQDLERYVQDADVRWEYCVRAKRGQTDTSLPGCFSKDQVYLDGIVRILRHRQTIDFPLLTSLGKVSYEDVDHLRPHGVLDNTRVPHFMQDLARYRQQLEHIMATNRLDEAELGRLLPD.

Disordered stretches follow at residues 1-40 (MVLD…PLYP) and 76-116 (HMRR…LRPA). Residue His280 participates in Zn(2+) binding. Glu281 (nucleophile) is an active-site residue. His285 and Glu316 together coordinate Zn(2+).

The protein belongs to the peptidase MATCAP family. Requires Zn(2+) as cofactor.

It is found in the cytoplasm. It localises to the cytoskeleton. It catalyses the reaction C-terminal L-alpha-aminoacyl-L-glutamyl-L-glutamyl-L-tyrosyl-[tubulin] + H2O = C-terminal L-alpha-aminoacyl-L-glutamyl-L-glutamyl-[tubulin] + L-tyrosine. The catalysed reaction is C-terminal L-alpha-aminoacyl-L-glutamyl-L-glutamyl-L-phenylalanyl-[tubulin] + H2O = C-terminal L-alpha-aminoacyl-L-glutamyl-L-glutamyl-[tubulin] + L-phenylalanine. In terms of biological role, tyrosine carboxypeptidase that removes the C-terminal tyrosine residue of alpha-tubulin, thereby regulating microtubule dynamics and function. Also able to remove the C-terminal phenylalanine residue of alpha-tubulin TUBA8. Recognizes adjacent tubulin dimers along the same protofilament. In Homo sapiens (Human), this protein is Microtubule-associated tyrosine carboxypeptidase 1.